We begin with the raw amino-acid sequence, 431 residues long: Probable amino-acid ABC transporter periplasmic-binding protein y4oP (431 aa).

An N-terminal signal peptide occupies residues 1–25; it reads MKRRTFTAGLAALPFLGSSLTRAFA.

It belongs to the bacterial solute-binding protein 1 family.

The protein resides in the periplasm. Probably part of the binding-protein-dependent transport system y4oPQRS. This system probably transports a sugar-like molecule. The polypeptide is Probable amino-acid ABC transporter periplasmic-binding protein y4oP (Sinorhizobium fredii (strain NBRC 101917 / NGR234)).